Reading from the N-terminus, the 399-residue chain is Insertion element IS116 uncharacterized 44.8 kDa protein (399 aa).

Belongs to the transposase IS1111A/IS1328/IS1533 family.

This is Insertion element IS116 uncharacterized 44.8 kDa protein from Streptomyces clavuligerus.